The sequence spans 534 residues: Protein FAM83D (534 aa).

Disordered stretches follow at residues 320–372 and 501–534; these read TPPS…STLG and GLNRGRKAQQEARQPNTNIDSGIMGTWPKSRGLQ. The span at 329-342 shows a compositional bias: polar residues; it reads TKPQAERLTSTPAR. Over residues 350 to 362 the composition is skewed to basic and acidic residues; sequence RMNKDIEEPDRKS. Polar residues predominate over residues 511–520; that stretch reads EARQPNTNID.

The protein belongs to the FAM83 family.

Its subcellular location is the cytoplasm. The protein localises to the cytoskeleton. It localises to the spindle. It is found in the spindle pole. Functionally, may regulate cell proliferation, growth, migration and epithelial to mesenchymal transition. May also be important for proper chromosome congression and alignment during mitosis. In Danio rerio (Zebrafish), this protein is Protein FAM83D.